The following is a 653-amino-acid chain: Fidgetin-like protein 2 (653 aa).

Disordered stretches follow at residues 1–36 (MHWT…ELPP), 86–129 (ASFL…SGAL), and 216–240 (YGAL…APTP). Positions 10-27 (PLNQWPEQHLDVSSTTPS) are enriched in polar residues. Pro residues predominate over residues 97–107 (EPWPGPEPPYP). Residues 119 to 129 (KSGGGGGSGAL) are compositionally biased toward gly residues. The segment covering 219–240 (LPPPPGPPPAPYLTPGLPAPTP) has biased composition (pro residues). ATP contacts are provided by residues alanine 395 and 435–440 (GAGKAL).

This sequence belongs to the AAA ATPase family. Mg(2+) is required as a cofactor.

It is found in the cytoplasm. The protein resides in the cell cortex. It catalyses the reaction ATP + H2O = ADP + phosphate + H(+). Microtubule-severing enzyme that negatively regulates cell migration and wound healing. In migrating cells, targets dynamic microtubules (MTs) at the leading edge and severs them, thereby suppressing motility. Microtubule severing releases ARHGEF2 which activates RHOA, which in turn regulates focal ahesion turnover via focal adhesion kinase, as opposed to F-actin polymerization, to suppress cell motility. Negative regulator of axon regeneration that suppresses axonal growth by selectively severing dynamic MTs in the distal axon shaft and growth cone. Contributes to proper cell branching during endothelial and neuronal development. The polypeptide is Fidgetin-like protein 2 (Homo sapiens (Human)).